A 235-amino-acid chain; its full sequence is Large ribosomal subunit protein uL1 (235 aa).

The protein belongs to the universal ribosomal protein uL1 family. As to quaternary structure, part of the 50S ribosomal subunit.

Functionally, binds directly to 23S rRNA. The L1 stalk is quite mobile in the ribosome, and is involved in E site tRNA release. In terms of biological role, protein L1 is also a translational repressor protein, it controls the translation of the L11 operon by binding to its mRNA. This Mycobacterium marinum (strain ATCC BAA-535 / M) protein is Large ribosomal subunit protein uL1.